The primary structure comprises 425 residues: Elongation factor 1-alpha (425 aa).

The tr-type G domain maps to 5-221; the sequence is KPHINLAVIG…DELEVPDKPT (217 aa). Residues 14 to 21 form a G1 region; it reads GHIDHGKS. Residue 14 to 21 participates in GTP binding; it reads GHIDHGKS. A Mg(2+)-binding site is contributed by S21. A G2 region spans residues 70–74; the sequence is GITID. The interval 91-94 is G3; sequence DCPG. Residues 91-95 and 146-149 contribute to the GTP site; these read DCPGH and NKMD. The interval 146-149 is G4; it reads NKMD. The segment at 185-187 is G5; the sequence is SAF.

Belongs to the TRAFAC class translation factor GTPase superfamily. Classic translation factor GTPase family. EF-Tu/EF-1A subfamily.

It is found in the cytoplasm. It carries out the reaction GTP + H2O = GDP + phosphate + H(+). Its function is as follows. GTP hydrolase that promotes the GTP-dependent binding of aminoacyl-tRNA to the A-site of ribosomes during protein biosynthesis. This chain is Elongation factor 1-alpha, found in Methanospirillum hungatei JF-1 (strain ATCC 27890 / DSM 864 / NBRC 100397 / JF-1).